Reading from the N-terminus, the 306-residue chain is tRNA dimethylallyltransferase 2 (306 aa).

An ATP-binding site is contributed by 19 to 26 (GATASGKT). Position 21–26 (21–26 (TASGKT)) interacts with substrate. Residues 44–47 (DSRQ) are interaction with substrate tRNA.

This sequence belongs to the IPP transferase family. As to quaternary structure, monomer. Mg(2+) is required as a cofactor.

The enzyme catalyses adenosine(37) in tRNA + dimethylallyl diphosphate = N(6)-dimethylallyladenosine(37) in tRNA + diphosphate. Catalyzes the transfer of a dimethylallyl group onto the adenine at position 37 in tRNAs that read codons beginning with uridine, leading to the formation of N6-(dimethylallyl)adenosine (i(6)A). The chain is tRNA dimethylallyltransferase 2 from Citrifermentans bemidjiense (strain ATCC BAA-1014 / DSM 16622 / JCM 12645 / Bem) (Geobacter bemidjiensis).